The following is a 124-amino-acid chain: MALSKDDILNAIAEMSVMEVVELVEAMEEKFNVSAAAAVAAAPAAAAAGEAAEEKTEFDVVLTGAGEKKVNVIKAVRELTGLGLKEAKEMVDGAPSTVKEGASKDEAEEAKKKLEEAGASVELK.

Residues glycine 93–lysine 124 form a disordered region. Positions glycine 101 to glutamate 116 are enriched in basic and acidic residues.

The protein belongs to the bacterial ribosomal protein bL12 family. As to quaternary structure, homodimer. Part of the ribosomal stalk of the 50S ribosomal subunit. Forms a multimeric L10(L12)X complex, where L10 forms an elongated spine to which 2 to 4 L12 dimers bind in a sequential fashion. Binds GTP-bound translation factors.

In terms of biological role, forms part of the ribosomal stalk which helps the ribosome interact with GTP-bound translation factors. Is thus essential for accurate translation. This is Large ribosomal subunit protein bL12 from Marinobacter nauticus (strain ATCC 700491 / DSM 11845 / VT8) (Marinobacter aquaeolei).